Reading from the N-terminus, the 899-residue chain is Inositol 1,4,5-triphosphate receptor associated 1 (899 aa).

Disordered regions lie at residues 32 to 110, 164 to 286, 324 to 391, and 463 to 486; these read PGTH…HRHL, RRGR…PLQH, KTAR…EEPG, and AAEQDKGVSPELAPAAEEEESKSG. Over residues 100–110 the composition is skewed to basic residues; it reads SPHRRLSHRHL. Ser-106 is modified (phosphoserine). An interaction with PRKG1 region spans residues 140–172; that stretch reads SEEDKKKNLALLEEAKLVSERFLTRRGRKSRSS. The segment covering 171–180 has biased composition (polar residues); it reads SSLGDSPSAV. Low complexity predominate over residues 181 to 203; that stretch reads SPNLSSGASPASSRSCSLTISTS. The span at 266–281 shows a compositional bias: basic and acidic residues; that stretch reads TVEKTKELTVEQKENF. Polar residues predominate over residues 333 to 351; the sequence is PRTTAQGSGGTVSPHSLGQ. The residue at position 382 (Ser-382) is a Phosphoserine. The tract at residues 521–567 is interaction with ITPR1; sequence NVFVQLSLAFRNDSYTLESRINQAERERNLTEENTEKELENFKASIT. Residues 534–632 are a coiled coil; that stretch reads SYTLESRINQ…MQYVENLKRT (99 aa). Residues Ser-670 and Ser-683 each carry the phosphoserine modification. Disordered regions lie at residues 695–722 and 757–818; these read LPGQAPSSSPMPSLPALSESSNGKSSIS and TSQE…DQGS. A compositionally biased stretch (low complexity) spans 699–715; it reads APSSSPMPSLPALSESS. 2 stretches are compositionally biased toward basic and acidic residues: residues 759–770 and 777–787; these read QETKAKAEEEAY and GVKKTEELQDL. Acidic residues predominate over residues 788-814; the sequence is KEEEEEEQKTESPEEPEEVEETQEDEK. A helical transmembrane segment spans residues 839–859; the sequence is WQVIWMMAAVMLVLSVVLGLY. Residues 867–899 form a disordered region; the sequence is EEADGPPGRSTCSAAQRDSWWSSGLQQELPAEQ. The segment covering 876-892 has biased composition (polar residues); that stretch reads STCSAAQRDSWWSSGLQ.

Part of cGMP kinase signaling complex at least composed of ACTA2/alpha-actin, CNN1/calponin H1, PLN/phospholamban, PRKG1 and ITPR1. Interacts with PRKG1/cGKI-beta and ITPR1/IP3R type I. Interacts with HCN4; regulates HCN4 channel activity. Phosphorylated by PRKG1/cGKI. Highly expressed in smooth muscle such as aorta, colon and uterus. Detected in the brain, in the thalamus, in the hippocampus and myenteric plexus. Highly expressed in megakaryocytes. Down-regulated during macrophage differentiation.

The protein localises to the membrane. It is found in the cytoplasm. It localises to the perinuclear region. Its subcellular location is the sarcoplasmic reticulum. In terms of biological role, plays a role as NO/PRKG1-dependent regulator of IP3-induced calcium release; its phosphorylation by PRKG1 inhibits bradykinin and IP3-induced calcium release from intracellular stores. Recruits PRKG1 to the endoplasmic reticulum and may mediate the assembly of PRKG1 and ITPR1 in a macrocomplex. Involved in PRKG1 signaling cascade leading to inhibition of platelet activation and aggregation. Also mediates NO-dependent inhibition of calcium signaling in gastrointestinal smooth muscle contributing to NO-dependent relaxation. Plays a role in the regulation of cellular excitability by regulating the hyperpolarization-activated cyclic nucleotide-gated HCN4 channel activity. In Mus musculus (Mouse), this protein is Inositol 1,4,5-triphosphate receptor associated 1 (Irag1).